The chain runs to 543 residues: ADP,ATP carrier protein 3 (543 aa).

10 helical membrane-spanning segments follow: residues 46-66 (VLYLSLLFGVITMVHTIMGNL), 86-106 (IFLPPCSLLFIWAIQLGLSLF), 111-131 (MFDITLILFSGCYILFGLVVW), 175-195 (FLFLCSEMWGALVVSYFFNIF), 209-229 (ISVYNISNAISIFLSAVLTLV), 243-263 (ELGFRILILVLGSTVIGILAL), 306-326 (LLIAISLNVLLYGVTSTLVEA), 346-366 (FANFYNGLEQIIIAISLLVVI), 382-402 (LASLPIVIAMFSLFSVFLIAF), and 504-524 (SVSGILIVIIIAMWYFILKYL).

The protein belongs to the ADP/ATP translocase tlc family.

The protein resides in the mitosome membrane. Functionally, ATP transporter involved in the uptake of ATP from the parasite cell cytoplasm into the mitosome matrix. Equilibrates nucleotide pools across a concentration gradient between both sides of the mitosome membrane. This Encephalitozoon cuniculi (strain GB-M1) (Microsporidian parasite) protein is ADP,ATP carrier protein 3 (NTT3).